Reading from the N-terminus, the 597-residue chain is Lipoprotein LpqB (597 aa).

An N-terminal signal peptide occupies residues 1–28 (MTPGSRSAMRSRSVCGAIALAVLVTVSG). The N-palmitoyl cysteine moiety is linked to residue cysteine 29. Cysteine 29 carries S-diacylglycerol cysteine lipidation. The span at 39-51 (QAIGTINRDSPGS) shows a compositional bias: polar residues. The segment at 39-59 (QAIGTINRDSPGSSVAAPAPG) is disordered.

It belongs to the LpqB lipoprotein family.

The protein resides in the cell membrane. In Rhodococcus opacus (strain B4), this protein is Lipoprotein LpqB.